The following is a 758-amino-acid chain: 5-methyltetrahydropteroyltriglutamate--homocysteine methyltransferase (758 aa).

5-methyltetrahydropteroyltri-L-glutamate is bound by residues 17–20 (RELK) and Lys117. L-homocysteine is bound by residues 434-436 (IGS) and Glu487. L-methionine contacts are provided by residues 434 to 436 (IGS) and Glu487. Residues 518-519 (RC) and Trp564 contribute to the 5-methyltetrahydropteroyltri-L-glutamate site. Asp602 is an L-homocysteine binding site. Residue Asp602 coordinates L-methionine. Glu608 is a binding site for 5-methyltetrahydropteroyltri-L-glutamate. Zn(2+) is bound by residues His644, Cys646, and Glu668. His697 functions as the Proton donor in the catalytic mechanism. Residue Cys729 participates in Zn(2+) binding.

It belongs to the vitamin-B12 independent methionine synthase family. Requires Zn(2+) as cofactor.

The enzyme catalyses 5-methyltetrahydropteroyltri-L-glutamate + L-homocysteine = tetrahydropteroyltri-L-glutamate + L-methionine. Its pathway is amino-acid biosynthesis; L-methionine biosynthesis via de novo pathway; L-methionine from L-homocysteine (MetE route): step 1/1. In terms of biological role, catalyzes the transfer of a methyl group from 5-methyltetrahydrofolate to homocysteine resulting in methionine formation. The polypeptide is 5-methyltetrahydropteroyltriglutamate--homocysteine methyltransferase (Sodalis glossinidius (strain morsitans)).